A 278-amino-acid chain; its full sequence is Elongation factor Ts 2, mitochondrial (278 aa).

The protein belongs to the EF-Ts family.

It is found in the mitochondrion. In terms of biological role, associates with the EF-Tu.GDP complex and induces the exchange of GDP to GTP. It remains bound to the aminoacyl-tRNA.EF-Tu.GTP complex up to the GTP hydrolysis stage on the ribosome. The sequence is that of Elongation factor Ts 2, mitochondrial from Trypanosoma cruzi (strain CL Brener).